A 133-amino-acid polypeptide reads, in one-letter code: uncharacterized protein (133 aa).

Transmembrane regions (helical) follow at residues 5 to 27 (KLFF…FSLI), 42 to 64 (IAWN…YSLY), 77 to 99 (ALIS…TFSS), and 103 to 125 (LVWW…LLLK).

It localises to the cell membrane. This is an uncharacterized protein from Bacillus subtilis (strain 168).